A 104-amino-acid chain; its full sequence is Iron-sulfur cluster assembly protein CyaY (104 aa).

This sequence belongs to the frataxin family.

In terms of biological role, involved in iron-sulfur (Fe-S) cluster assembly. May act as a regulator of Fe-S biogenesis. The polypeptide is Iron-sulfur cluster assembly protein CyaY (Aliivibrio fischeri (strain ATCC 700601 / ES114) (Vibrio fischeri)).